The sequence spans 106 residues: Small ribosomal subunit protein uS10 (106 aa).

It belongs to the universal ribosomal protein uS10 family. In terms of assembly, part of the 30S ribosomal subunit.

Involved in the binding of tRNA to the ribosomes. The protein is Small ribosomal subunit protein uS10 of Mycoplasma genitalium (strain ATCC 33530 / DSM 19775 / NCTC 10195 / G37) (Mycoplasmoides genitalium).